The primary structure comprises 360 residues: Glutamate 5-kinase (360 aa).

ATP is bound at residue Lys11. The substrate site is built by Ser51, Asp138, and Asn150. In terms of domain architecture, PUA spans 278-356; it reads KGEIHINECA…GKKPVVHYDY (79 aa).

The protein belongs to the glutamate 5-kinase family.

The protein resides in the cytoplasm. It catalyses the reaction L-glutamate + ATP = L-glutamyl 5-phosphate + ADP. The protein operates within amino-acid biosynthesis; L-proline biosynthesis; L-glutamate 5-semialdehyde from L-glutamate: step 1/2. Catalyzes the transfer of a phosphate group to glutamate to form L-glutamate 5-phosphate. The sequence is that of Glutamate 5-kinase from Bacteroides thetaiotaomicron (strain ATCC 29148 / DSM 2079 / JCM 5827 / CCUG 10774 / NCTC 10582 / VPI-5482 / E50).